Consider the following 97-residue polypeptide: Putative pterin-4-alpha-carbinolamine dehydratase (97 aa).

Belongs to the pterin-4-alpha-carbinolamine dehydratase family.

The catalysed reaction is (4aS,6R)-4a-hydroxy-L-erythro-5,6,7,8-tetrahydrobiopterin = (6R)-L-erythro-6,7-dihydrobiopterin + H2O. The sequence is that of Putative pterin-4-alpha-carbinolamine dehydratase from Dinoroseobacter shibae (strain DSM 16493 / NCIMB 14021 / DFL 12).